The primary structure comprises 209 residues: Large ribosomal subunit protein uL3 (209 aa).

The span at G112–N122 shows a compositional bias: polar residues. Residues G112 to M146 are disordered.

The protein belongs to the universal ribosomal protein uL3 family. In terms of assembly, part of the 50S ribosomal subunit. Forms a cluster with proteins L14 and L19.

Its function is as follows. One of the primary rRNA binding proteins, it binds directly near the 3'-end of the 23S rRNA, where it nucleates assembly of the 50S subunit. The sequence is that of Large ribosomal subunit protein uL3 from Lactobacillus gasseri (strain ATCC 33323 / DSM 20243 / BCRC 14619 / CIP 102991 / JCM 1131 / KCTC 3163 / NCIMB 11718 / NCTC 13722 / AM63).